We begin with the raw amino-acid sequence, 275 residues long: tRNA pseudouridine synthase A (275 aa).

D62 serves as the catalytic Nucleophile. Y124 is a substrate binding site.

It belongs to the tRNA pseudouridine synthase TruA family. Homodimer.

It catalyses the reaction uridine(38/39/40) in tRNA = pseudouridine(38/39/40) in tRNA. Its function is as follows. Formation of pseudouridine at positions 38, 39 and 40 in the anticodon stem and loop of transfer RNAs. The polypeptide is tRNA pseudouridine synthase A (Herminiimonas arsenicoxydans).